The following is a 520-amino-acid chain: Peptide chain release factor 3 (520 aa).

One can recognise a tr-type G domain in the interval 8 to 273; the sequence is ESRKTFAIIS…AYVDHAPMPN (266 aa). Residues 17–24, 85–89, and 139–142 each bind GTP; these read SHPDAGKT, DTPGH, and NKLD.

Belongs to the TRAFAC class translation factor GTPase superfamily. Classic translation factor GTPase family. PrfC subfamily.

The protein localises to the cytoplasm. In terms of biological role, increases the formation of ribosomal termination complexes and stimulates activities of RF-1 and RF-2. It binds guanine nucleotides and has strong preference for UGA stop codons. It may interact directly with the ribosome. The stimulation of RF-1 and RF-2 is significantly reduced by GTP and GDP, but not by GMP. This is Peptide chain release factor 3 from Staphylococcus carnosus (strain TM300).